The following is a 608-amino-acid chain: ATP-citrate synthase beta chain protein 1 (608 aa).

Residues 214-234 (ILRF…ELGG) and 265-291 (FKSE…KNQA) contribute to the ATP site. Glutamate 231 contacts Mg(2+). Catalysis depends on histidine 273, which acts as the Tele-phosphohistidine intermediate. 292–302 (LKDAGAVVPTS) contributes to the CoA binding site.

This sequence belongs to the succinate/malate CoA ligase alpha subunit family. Heterooctamer of 4 alpha and 4 beta chains.

It localises to the cytoplasm. It is found in the cytosol. The enzyme catalyses oxaloacetate + acetyl-CoA + ADP + phosphate = citrate + ATP + CoA. In terms of biological role, ATP citrate-lyase is the primary enzyme responsible for the synthesis of cytosolic acetyl-CoA, used for the elongation of fatty acids and biosynthesis of isoprenoids, flavonoids and malonated derivatives. May supply substrate to the cytosolic acetyl-CoA carboxylase, which generates the malonyl-CoA used for the synthesis of a multitude of compounds, including very long chain fatty acids and flavonoids. In contrast to all known animal ACL enzymes having a homomeric structure, plant ACLs are composed of alpha and beta chains. The protein is ATP-citrate synthase beta chain protein 1 (ACLB-1) of Oryza sativa subsp. japonica (Rice).